The following is a 530-amino-acid chain: Phosphoenolpyruvate carboxykinase (ATP) (530 aa).

Residues arginine 56, tyrosine 196, and lysine 202 each contribute to the substrate site. Residues lysine 202, histidine 221, and 237–245 (GLSGTGKTT) contribute to the ATP site. Mn(2+) contacts are provided by lysine 202 and histidine 221. Position 258 (aspartate 258) interacts with Mn(2+). ATP is bound by residues glutamate 286, arginine 322, 438-439 (RI), and threonine 444. Arginine 322 provides a ligand contact to substrate.

The protein belongs to the phosphoenolpyruvate carboxykinase (ATP) family. Monomer. Requires Mn(2+) as cofactor.

It is found in the cytoplasm. It catalyses the reaction oxaloacetate + ATP = phosphoenolpyruvate + ADP + CO2. It functions in the pathway carbohydrate biosynthesis; gluconeogenesis. Involved in the gluconeogenesis. Catalyzes the conversion of oxaloacetate (OAA) to phosphoenolpyruvate (PEP) through direct phosphoryl transfer between the nucleoside triphosphate and OAA. The sequence is that of Phosphoenolpyruvate carboxykinase (ATP) from Photobacterium profundum (strain SS9).